A 95-amino-acid chain; its full sequence is Large ribosomal subunit protein bL21 (95 aa).

It belongs to the bacterial ribosomal protein bL21 family. Part of the 50S ribosomal subunit. Contacts protein L20.

Its function is as follows. This protein binds to 23S rRNA in the presence of protein L20. The sequence is that of Large ribosomal subunit protein bL21 from Prosthecochloris vibrioformis (Chlorobium vibrioforme).